Consider the following 578-residue polypeptide: Arginine--tRNA ligase (578 aa).

The short motif at 122 to 132 (PNVAKEMHVGH) is the 'HIGH' region element.

Belongs to the class-I aminoacyl-tRNA synthetase family. In terms of assembly, monomer.

Its subcellular location is the cytoplasm. The catalysed reaction is tRNA(Arg) + L-arginine + ATP = L-arginyl-tRNA(Arg) + AMP + diphosphate. The protein is Arginine--tRNA ligase of Shigella sonnei (strain Ss046).